Reading from the N-terminus, the 176-residue chain is KxDL motif-containing protein 1 (176 aa).

Met1 bears the N-acetylmethionine mark. The segment at 95 to 176 (HPEAFSHIPE…HTDDEEMPGE (82 aa)) is disordered. Low complexity predominate over residues 119 to 131 (STTTTIATSEQST). The segment covering 132 to 145 (GSCDTSPDTVSPSL) has biased composition (polar residues).

Belongs to the KXD1 family. As to quaternary structure, component of the BLOC-one-related complex (BORC) which is composed of BLOC1S1, BLOC1S2, BORCS5, BORCS6, BORCS7, BORCS8, KXD1 and SNAPIN. Associates with the BLOC-1 complex. Interacts with BLOC1S1. Interacts with DTNBP1/BLOC1S7 (via coiled-coil domain).

It is found in the lysosome membrane. As part of the BORC complex may play a role in lysosomes movement and localization at the cell periphery. Associated with the cytosolic face of lysosomes, the BORC complex may recruit ARL8B and couple lysosomes to microtubule plus-end-directed kinesin motor. May also be involved in the biogenesis of lysosome-related organelles such as melanosomes. The polypeptide is KxDL motif-containing protein 1 (KXD1) (Bos taurus (Bovine)).